The primary structure comprises 81 residues: Albumin-1 (81 aa).

Residues 27–34 (LSSVAKMI) constitute a propeptide that is removed on maturation.

In terms of processing, three disulfide bonds are probably present. The C-terminal glycine may be removed from A1b.

A1b binds to basic 7S globulin (BG) and stimulates its phosphorylation activity. The polypeptide is Albumin-1 (LEG1) (Lupinus angustifolius (Narrow-leaved blue lupine)).